Here is a 469-residue protein sequence, read N- to C-terminus: Exodeoxyribonuclease 7 large subunit (469 aa).

Belongs to the XseA family. Heterooligomer composed of large and small subunits.

It localises to the cytoplasm. It catalyses the reaction Exonucleolytic cleavage in either 5'- to 3'- or 3'- to 5'-direction to yield nucleoside 5'-phosphates.. Functionally, bidirectionally degrades single-stranded DNA into large acid-insoluble oligonucleotides, which are then degraded further into small acid-soluble oligonucleotides. This Mycoplasma mycoides subsp. mycoides SC (strain CCUG 32753 / NCTC 10114 / PG1) protein is Exodeoxyribonuclease 7 large subunit.